Consider the following 557-residue polypeptide: Polypyrimidine tract-binding protein 1 (557 aa).

An N-acetylmethionine modification is found at Met1. Ser16 is modified (phosphoserine). RRM domains lie at 59-143 (RVIH…SSPN), 184-260 (LRII…FSKL), and 363-437 (SVLL…LSKH). A Glycyl lysine isopeptide (Lys-Gly) (interchain with G-Cter in SUMO2) cross-link involves residue Lys65. At Tyr127 the chain carries Phosphotyrosine. Residue Thr138 is modified to Phosphothreonine. A Phosphoserine modification is found at Ser141. A Glycyl lysine isopeptide (Lys-Gly) (interchain with G-Cter in SUMO2) cross-link involves residue Lys218. Phosphoserine is present on Ser459. The 76-residue stretch at 480-555 (ATLHLSNIPP…HHLRVSFSKS (76 aa)) folds into the RRM 4 domain.

As to quaternary structure, monomer. Part of a ternary complex containing KHSRP, PTBP1, PTBP2 and HNRPH1. Interacts with RAVER1 and SFPQ.

It is found in the nucleus. Functionally, plays a role in pre-mRNA splicing and in the regulation of alternative splicing events. Activates exon skipping of its own pre-mRNA during muscle cell differentiation. Binds to the polypyrimidine tract of introns. May promote RNA looping when bound to two separate polypyrimidine tracts in the same pre-mRNA. May promote the binding of U2 snRNP to pre-mRNA. Cooperates with RAVER1 to modulate switching between mutually exclusive exons during maturation of the TPM1 pre-mRNA. Represses the splicing of MAPT/Tau exon 10. Binds to polypyrimidine-rich controlling element (PCE) of CFTR and promotes exon skipping of CFTR exon 9, thereby antagonizing TIA1 and its role in exon inclusion of CFTR exon 9. Plays a role in the splicing of pyruvate kinase PKM by binding repressively to a polypyrimidine tract flanking PKM exon 9, inhibiting exon 9 inclusion and resulting in exon 10 inclusion and production of the PKM M2 isoform. The protein is Polypyrimidine tract-binding protein 1 (PTBP1) of Sus scrofa (Pig).